Consider the following 226-residue polypeptide: Flagellar L-ring protein (226 aa).

The N-terminal stretch at 1-15 (MKRLAVSILCLALAG) is a signal peptide. Cys-16 carries the N-palmitoyl cysteine lipid modification. The S-diacylglycerol cysteine moiety is linked to residue Cys-16.

This sequence belongs to the FlgH family. In terms of assembly, the basal body constitutes a major portion of the flagellar organelle and consists of four rings (L,P,S, and M) mounted on a central rod.

The protein localises to the cell outer membrane. The protein resides in the bacterial flagellum basal body. Functionally, assembles around the rod to form the L-ring and probably protects the motor/basal body from shearing forces during rotation. The polypeptide is Flagellar L-ring protein (Geobacter metallireducens (strain ATCC 53774 / DSM 7210 / GS-15)).